We begin with the raw amino-acid sequence, 499 residues long: Ethanolamine-phosphate phospho-lyase (499 aa).

N6-(pyridoxal phosphate)lysine is present on Lys-278. Over residues Arg-468 to Ser-479 the composition is skewed to basic and acidic residues. Residues Arg-468–Thr-499 are disordered.

Belongs to the class-III pyridoxal-phosphate-dependent aminotransferase family. As to quaternary structure, homotetramer. The cofactor is pyridoxal 5'-phosphate.

It localises to the mitochondrion. It carries out the reaction phosphoethanolamine + H2O = acetaldehyde + NH4(+) + phosphate. Catalyzes the pyridoxal-phosphate-dependent breakdown of phosphoethanolamine, converting it to ammonia, inorganic phosphate and acetaldehyde. This Homo sapiens (Human) protein is Ethanolamine-phosphate phospho-lyase (ETNPPL).